A 319-amino-acid polypeptide reads, in one-letter code: Tyrosine--tRNA ligase (319 aa).

Tyrosine 40 contributes to the L-tyrosine binding site. The short motif at 45 to 53 is the 'HIGH' region element; the sequence is PSGRIHMGH. L-tyrosine is bound by residues tyrosine 159, glutamine 163, aspartate 166, and glutamine 181. The short motif at 216–220 is the 'KMSKS' region element; it reads KMSSS. Serine 219 is an ATP binding site.

The protein belongs to the class-I aminoacyl-tRNA synthetase family. TyrS type 3 subfamily. Homodimer.

It is found in the cytoplasm. It carries out the reaction tRNA(Tyr) + L-tyrosine + ATP = L-tyrosyl-tRNA(Tyr) + AMP + diphosphate + H(+). Catalyzes the attachment of tyrosine to tRNA(Tyr) in a two-step reaction: tyrosine is first activated by ATP to form Tyr-AMP and then transferred to the acceptor end of tRNA(Tyr). The polypeptide is Tyrosine--tRNA ligase (Methanococcus maripaludis (strain DSM 14266 / JCM 13030 / NBRC 101832 / S2 / LL)).